Consider the following 323-residue polypeptide: Acetyl-coenzyme A carboxylase carboxyl transferase subunit alpha (323 aa).

Residues 40-293 enclose the CoA carboxyltransferase C-terminal domain; the sequence is LSEKSLQLTK…RKALSDSLKT (254 aa).

Belongs to the AccA family. As to quaternary structure, acetyl-CoA carboxylase is a heterohexamer composed of biotin carboxyl carrier protein (AccB), biotin carboxylase (AccC) and two subunits each of ACCase subunit alpha (AccA) and ACCase subunit beta (AccD).

It is found in the cytoplasm. It carries out the reaction N(6)-carboxybiotinyl-L-lysyl-[protein] + acetyl-CoA = N(6)-biotinyl-L-lysyl-[protein] + malonyl-CoA. The protein operates within lipid metabolism; malonyl-CoA biosynthesis; malonyl-CoA from acetyl-CoA: step 1/1. Its function is as follows. Component of the acetyl coenzyme A carboxylase (ACC) complex. First, biotin carboxylase catalyzes the carboxylation of biotin on its carrier protein (BCCP) and then the CO(2) group is transferred by the carboxyltransferase to acetyl-CoA to form malonyl-CoA. This chain is Acetyl-coenzyme A carboxylase carboxyl transferase subunit alpha, found in Polynucleobacter asymbioticus (strain DSM 18221 / CIP 109841 / QLW-P1DMWA-1) (Polynucleobacter necessarius subsp. asymbioticus).